Here is a 115-residue protein sequence, read N- to C-terminus: Large ribosomal subunit protein bL19 (115 aa).

The protein belongs to the bacterial ribosomal protein bL19 family.

Its function is as follows. This protein is located at the 30S-50S ribosomal subunit interface and may play a role in the structure and function of the aminoacyl-tRNA binding site. The chain is Large ribosomal subunit protein bL19 from Lactobacillus delbrueckii subsp. bulgaricus (strain ATCC BAA-365 / Lb-18).